The following is a 166-amino-acid chain: Replication restart protein DnaT (166 aa).

The protein belongs to the DnaT family. Homooligomerizes. Interacts with PriB. Component of the replication restart primosome. Primosome assembly occurs via a 'hand-off' mechanism. PriA binds to replication forks, subsequently PriB then DnaT bind; DnaT then displaces ssDNA to generate the helicase loading substrate.

Its function is as follows. Involved in the restart of stalled replication forks, which reloads the replicative helicase on sites other than the origin of replication. Can function in multiple replication restart pathways. Displaces ssDNA from a PriB-ssDNA complex. Probably forms a spiral filament on ssDNA. This chain is Replication restart protein DnaT, found in Buchnera aphidicola subsp. Schizaphis graminum (strain Sg).